We begin with the raw amino-acid sequence, 271 residues long: RELT-like protein 1 (271 aa).

The N-terminal stretch at 1-23 (MAPRGLPGSAVLAAAVFVGGAVS) is a signal peptide. The Extracellular segment spans residues 24-57 (SPLVRSDHSGSHPLPSKTETTPSPTNNNGNGHPE). A disordered region spans residues 27–52 (VRSDHSGSHPLPSKTETTPSPTNNNG). The segment covering 36–52 (PLPSKTETTPSPTNNNG) has biased composition (low complexity). A helical membrane pass occupies residues 58 to 78 (YIAYALVPVFFVMGLFGVLIC). The Cytoplasmic segment spans residues 79-271 (HLLKKKGYRC…PVKRQQSDSE (193 aa)). 2 positions are modified to phosphoserine: serine 109 and serine 114. Disordered regions lie at residues 144 to 168 (CDPESPVTPSTPGSPPVSPGPLSPG) and 231 to 271 (TKVE…SDSE). The segment covering 155-165 (PGSPPVSPGPL) has biased composition (pro residues). The span at 231 to 244 (TKVEPKSNQKERRS) shows a compositional bias: basic and acidic residues. A phosphoserine mark is found at serine 244 and serine 247.

This sequence belongs to the RELT family. Interacts with RELT, RELL2, OXSR1 and PLSCR1.

The protein localises to the cell membrane. Functionally, induces activation of MAPK14/p38 cascade, when overexpressed. Induces apoptosis, when overexpressed. The protein is RELT-like protein 1 (RELL1) of Bos taurus (Bovine).